Here is a 169-residue protein sequence, read N- to C-terminus: Peptide methionine sulfoxide reductase MsrA (169 aa).

Cys11 is an active-site residue.

It belongs to the MsrA Met sulfoxide reductase family.

The catalysed reaction is L-methionyl-[protein] + [thioredoxin]-disulfide + H2O = L-methionyl-(S)-S-oxide-[protein] + [thioredoxin]-dithiol. It catalyses the reaction [thioredoxin]-disulfide + L-methionine + H2O = L-methionine (S)-S-oxide + [thioredoxin]-dithiol. Its function is as follows. Has an important function as a repair enzyme for proteins that have been inactivated by oxidation. Catalyzes the reversible oxidation-reduction of methionine sulfoxide in proteins to methionine. The protein is Peptide methionine sulfoxide reductase MsrA of Leifsonia xyli subsp. xyli (strain CTCB07).